We begin with the raw amino-acid sequence, 408 residues long: Histidine--tRNA ligase (408 aa).

Belongs to the class-II aminoacyl-tRNA synthetase family. In terms of assembly, homodimer.

The protein localises to the cytoplasm. It carries out the reaction tRNA(His) + L-histidine + ATP = L-histidyl-tRNA(His) + AMP + diphosphate + H(+). In Campylobacter concisus (strain 13826), this protein is Histidine--tRNA ligase.